The primary structure comprises 394 residues: NAD(P)H-quinone oxidoreductase subunit H 2 (394 aa).

Belongs to the complex I 49 kDa subunit family. In terms of assembly, NDH-1 can be composed of about 15 different subunits; different subcomplexes with different compositions have been identified which probably have different functions.

It is found in the cell inner membrane. It catalyses the reaction a plastoquinone + NADH + (n+1) H(+)(in) = a plastoquinol + NAD(+) + n H(+)(out). The catalysed reaction is a plastoquinone + NADPH + (n+1) H(+)(in) = a plastoquinol + NADP(+) + n H(+)(out). Its function is as follows. NDH-1 shuttles electrons from an unknown electron donor, via FMN and iron-sulfur (Fe-S) centers, to quinones in the respiratory and/or the photosynthetic chain. The immediate electron acceptor for the enzyme in this species is believed to be plastoquinone. Couples the redox reaction to proton translocation, and thus conserves the redox energy in a proton gradient. Cyanobacterial NDH-1 also plays a role in inorganic carbon-concentration. In Gloeobacter violaceus (strain ATCC 29082 / PCC 7421), this protein is NAD(P)H-quinone oxidoreductase subunit H 2.